The chain runs to 510 residues: Protein phosphatase EYA3 (510 aa).

Disordered stretches follow at residues 1 to 32 and 175 to 233; these read MQEP…SNLS and YQTE…DASS. Residues 7-16 show a composition bias toward polar residues; the sequence is QTLSQVNNPD. Residues 192 to 203 show a composition bias toward low complexity; it reads LPSDSSASPPLS. Residues Ser199 and Ser203 each carry the phosphoserine modification. The active-site Nucleophile is the Asp246. Mg(2+) is bound by residues Asp246 and Asp248. The active-site Proton donor is Asp248. 2 positions are modified to phosphoserine: Ser375 and Ser409. Position 474 (Asp474) interacts with Mg(2+).

The protein belongs to the HAD-like hydrolase superfamily. EYA family. Interacts with SIX1 and DACH1, and probably SIX2, SIX4 and SIX5. Mg(2+) serves as cofactor. Ser-203 phosphorylation is required for localization at sites of DNA damage and directing interaction with H2AX. As to expression, expressed in branchial arches, CNS and developing eye.

The protein localises to the cytoplasm. It is found in the nucleus. The catalysed reaction is O-phospho-L-tyrosyl-[protein] + H2O = L-tyrosyl-[protein] + phosphate. Functionally, tyrosine phosphatase that specifically dephosphorylates 'Tyr-142' of histone H2AX (H2AXY142ph). 'Tyr-142' phosphorylation of histone H2AX plays a central role in DNA repair and acts as a mark that distinguishes between apoptotic and repair responses to genotoxic stress. Promotes efficient DNA repair by dephosphorylating H2AX, promoting the recruitment of DNA repair complexes containing MDC1. Its function as histone phosphatase probably explains its role in transcription regulation during organogenesis. The phosphatase activity has been shown in vitro. Coactivates SIX1. Seems to coactivate SIX2, SIX4 and SIX5. The repression of precursor cell proliferation in myoblasts by SIX1 is switched to activation through recruitment of EYA3 to the SIX1-DACH1 complex and seems to be dependent on EYA3 phosphatase activity. May be involved in development of the eye. May play a role in mediating the induction and differentiation of cranial placodes. The chain is Protein phosphatase EYA3 (Eya3) from Mus musculus (Mouse).